We begin with the raw amino-acid sequence, 272 residues long: Probable feruloyl esterase C (272 aa).

Residues Met-1–Ala-22 form the signal peptide.

This sequence belongs to the faeC family.

The protein resides in the secreted. It carries out the reaction feruloyl-polysaccharide + H2O = ferulate + polysaccharide.. In terms of biological role, involved in degradation of plant cell walls. Hydrolyzes the feruloyl-arabinose ester bond in arabinoxylans, and the feruloyl-galactose ester bond in pectin. Active against paranitrophenyl-acetate, methyl ferulate and wheat arabinoxylan. This chain is Probable feruloyl esterase C (faeC), found in Aspergillus fumigatus (strain ATCC MYA-4609 / CBS 101355 / FGSC A1100 / Af293) (Neosartorya fumigata).